Reading from the N-terminus, the 282-residue chain is Glycine betaine transport system permease protein OpuAB (282 aa).

Over 1–18 (MDRLPRIPLADIIDRFVD) the chain is Extracellular. A helical membrane pass occupies residues 19 to 39 (WITMTFGGFFDGIANGLAAFV). The Cytoplasmic segment spans residues 40-44 (NGIVT). The helical transmembrane segment at 45–65 (GLGFIPSILLTIIFAALAWWI) threads the bilayer. At 66-69 (STRG) the chain is on the extracellular side. A helical membrane pass occupies residues 70 to 90 (IALFTLIGFLLIDYLGYWDPM). An ABC transmembrane type-1 domain is found at 90–269 (MLQTLALVLT…IVAITLDRIT (180 aa)). The Cytoplasmic segment spans residues 91–93 (LQT). Residues 94–114 (LALVLTSVIISIVVGVPIGIW) form a helical membrane-spanning segment. Residues 115–137 (ASQKETVRRIVTPILDLMQTMPA) are Extracellular-facing. Residues 138–158 (FVYLLPAIFFFNIGVVPGVVA) form a helical membrane-spanning segment. At 159-215 (SVIFAMPPTIRMTVLGIKQVPADLIEATEAFGSTTAQRLFKVQLPLATKTILAGINQ) the chain is on the cytoplasmic side. Residues 216 to 236 (SIMLALSMVVIAAMVGAPGLG) traverse the membrane as a helical segment. Topologically, residues 237-242 (SEVYSA) are extracellular. The chain crosses the membrane as a helical span at residues 243-263 (VTQLKTGVGVEAGIAIVIVAI). Over 264-282 (TLDRITQNIKVKKKSRGNA) the chain is Cytoplasmic.

It belongs to the binding-protein-dependent transport system permease family. CysTW subfamily. As to quaternary structure, the complex is composed of two ATP-binding proteins (OpuAA), two transmembrane proteins (OpuAB) and a solute-binding protein (OpuAC).

It is found in the cell membrane. Involved in a multicomponent binding-protein-dependent transport system for glycine betaine; probably responsible for the translocation of the substrate across the membrane. In Bacillus subtilis (strain 168), this protein is Glycine betaine transport system permease protein OpuAB (opuAB).